The sequence spans 360 residues: Arginase, non-hepatic 3 (360 aa).

His122, Asp145, His147, and Asp149 together coordinate Mn(2+). Residues 147-151, 158-160, and Asp204 each bind substrate; these read HADIN and SGN. Mn(2+) is bound by residues Asp253 and Asp255. The substrate site is built by Thr267 and Glu298.

Belongs to the arginase family. In terms of assembly, homotrimer. Mn(2+) serves as cofactor. In terms of tissue distribution, expressed at differing tadpole stages in tail, intestine, hindlimb and trunk region. Strongest in tadpole tail.

It catalyses the reaction L-arginine + H2O = urea + L-ornithine. It functions in the pathway nitrogen metabolism; urea cycle; L-ornithine and urea from L-arginine: step 1/1. Its function is as follows. As well as its role in the urea cycle, may be involved in tissue remodeling. The sequence is that of Arginase, non-hepatic 3 (arg2-c) from Xenopus laevis (African clawed frog).